The following is a 499-amino-acid chain: Cytochrome P450 705A12 (499 aa).

Residues 4 to 24 (LIIVDFQNISIFILLCLFSFL) form a helical membrane-spanning segment. Cys-439 is a binding site for heme.

The protein belongs to the cytochrome P450 family. It depends on heme as a cofactor.

Its subcellular location is the membrane. In terms of biological role, may be involved in hydroxylation of the triterpene marneral. In Arabidopsis thaliana (Mouse-ear cress), this protein is Cytochrome P450 705A12.